We begin with the raw amino-acid sequence, 201 residues long: Oligoribonuclease (201 aa).

The Exonuclease domain occupies 20-183 (LVWLDMEMTG…ADIHESIDEL (164 aa)). The active site involves Y141.

Belongs to the oligoribonuclease family.

The protein resides in the cytoplasm. In terms of biological role, 3'-to-5' exoribonuclease specific for small oligoribonucleotides. This chain is Oligoribonuclease, found in Burkholderia pseudomallei (strain 1106a).